We begin with the raw amino-acid sequence, 345 residues long: Phosphoribosylformylglycinamidine cyclo-ligase (345 aa).

The protein belongs to the AIR synthase family.

Its subcellular location is the cytoplasm. It catalyses the reaction 2-formamido-N(1)-(5-O-phospho-beta-D-ribosyl)acetamidine + ATP = 5-amino-1-(5-phospho-beta-D-ribosyl)imidazole + ADP + phosphate + H(+). The protein operates within purine metabolism; IMP biosynthesis via de novo pathway; 5-amino-1-(5-phospho-D-ribosyl)imidazole from N(2)-formyl-N(1)-(5-phospho-D-ribosyl)glycinamide: step 2/2. The polypeptide is Phosphoribosylformylglycinamidine cyclo-ligase (Shigella dysenteriae serotype 1 (strain Sd197)).